Reading from the N-terminus, the 62-residue chain is Conotoxin Pn-014 (62 aa).

Positions 1-22 are cleaved as a signal peptide; sequence MRCLPVFVILLLLIASAPSVDA. The propeptide occupies 23 to 48; the sequence is RPKTKDDIPLVSFQDHAKRILQTFES. Tryptophan 61 carries the tryptophan amide modification.

This sequence belongs to the conotoxin T superfamily. Post-translationally, contains 2 disulfide bonds that can be either 'C1-C3, C2-C4' or 'C1-C4, C2-C3', since these disulfide connectivities have been observed for conotoxins with cysteine framework V (for examples, see AC P0DQQ7 and AC P81755). Expressed by the venom duct.

It localises to the secreted. The sequence is that of Conotoxin Pn-014 from Conus pennaceus (Feathered cone).